The chain runs to 574 residues: PI-PLC X domain-containing protein DDB_G0269228 (574 aa).

The interval M1–K42 is disordered. A compositionally biased stretch (low complexity) spans T21–S34. The 180-residue stretch at G270–G449 folds into the PI-PLC X-box domain.

This Dictyostelium discoideum (Social amoeba) protein is PI-PLC X domain-containing protein DDB_G0269228.